Reading from the N-terminus, the 349-residue chain is Heme A synthase (349 aa).

5 consecutive transmembrane segments (helical) span residues 15 to 35 (AVQV…VVGG), 101 to 121 (LLGR…ALTG), 132 to 152 (FGLF…VASG), 162 to 182 (YRLA…VAVA), and 203 to 223 (VLVG…GLDA). Histidine 265 serves as a coordination point for heme. A run of 3 helical transmembrane segments spans residues 268–288 (IAYL…RLGG), 296–316 (LVFA…VHMV), and 317–337 (PLDL…AAMI). Histidine 324 serves as a coordination point for heme.

Belongs to the COX15/CtaA family. Type 2 subfamily. In terms of assembly, interacts with CtaB. Heme b is required as a cofactor.

Its subcellular location is the cell membrane. The catalysed reaction is Fe(II)-heme o + 2 A + H2O = Fe(II)-heme a + 2 AH2. It functions in the pathway porphyrin-containing compound metabolism; heme A biosynthesis; heme A from heme O: step 1/1. In terms of biological role, catalyzes the conversion of heme O to heme A by two successive hydroxylations of the methyl group at C8. The first hydroxylation forms heme I, the second hydroxylation results in an unstable dihydroxymethyl group, which spontaneously dehydrates, resulting in the formyl group of heme A. The protein is Heme A synthase of Azorhizobium caulinodans (strain ATCC 43989 / DSM 5975 / JCM 20966 / LMG 6465 / NBRC 14845 / NCIMB 13405 / ORS 571).